We begin with the raw amino-acid sequence, 561 residues long: Transmembrane protein 209 (561 aa).

Phosphoserine is present on serine 11. A helical transmembrane segment spans residues 28–48 (VVLAWGLLNVSMAGMIYTEMT). Residue asparagine 57 is glycosylated (N-linked (GlcNAc...) asparagine). The chain crosses the membrane as a helical span at residues 60–80 (YWPLWYIELALASLFSLNALF). At serine 98 the chain carries Phosphoserine. Disordered stretches follow at residues 120–156 (LAAT…KFAT) and 200–232 (SSPY…PTDK). Low complexity predominate over residues 138–152 (SVLSYSPSRSPSTSP). A phosphoserine mark is found at serine 201 and serine 248. The segment at 250 to 270 (EEKQHRVKLGSPDSTSPSTSP) is disordered. Residues 260–270 (SPDSTSPSTSP) show a composition bias toward low complexity. Asparagine 274 is a glycosylation site (N-linked (GlcNAc...) asparagine). The residue at position 278 (serine 278) is a Phosphoserine.

As to quaternary structure, interacts with NUP205.

Its subcellular location is the membrane. The protein resides in the nucleus envelope. It localises to the golgi apparatus. The protein localises to the cytoplasm. Its function is as follows. Nuclear envelope protein which in association with NUP205, may be involved in nuclear transport of various nuclear proteins in addition to MYC. In Mus musculus (Mouse), this protein is Transmembrane protein 209 (Tmem209).